The primary structure comprises 399 residues: Putative 3'-5' exonuclease R431 (399 aa).

Residues 118-297 (FQIVDNWIEN…IYNELQLMTN (180 aa)) form the 3'-5' exonuclease domain. The region spanning 335-399 (ERRLKSIESK…NKYVIITRHC (65 aa)) is the R3H domain.

In Acanthamoeba polyphaga (Amoeba), this protein is Putative 3'-5' exonuclease R431.